The following is a 140-amino-acid chain: Hexon-interlacing protein (140 aa).

A coiled-coil region spans residues 100-127 (LTALLAQLDSLTRELNVVSQQLLDLRQQ).

The protein belongs to the adenoviridae hexon-interlacing protein family. As to quaternary structure, homotrimer. Interacts with hexon protein; this interaction tethers the hexons together. Self-interacts with adjacent proteins. Interacts with kinesin light chain KLC1; this interaction leads to capsid disruption at the nuclear pore complex during virus entry into host cell.

It localises to the virion. It is found in the host nucleus. Functionally, structural component of the virion that acts as a cement protein on the capsid exterior and forms triskelion structures consisting of three molecules that stabilize three hexon trimers at the center of each icosahedral facet and fixes the peripentonal hexons. Dispensable for assembly. During virus entry, recruits the anterograde motor kinesin-1 to the capsid docked at the nuclear pore complex thereby subjecting the docked capsid to a pulling force. The resulting tension leads to capsid disruption, dispersion of capsid fragments toward cell periphery and eventually viral DNA entry into the host nucleus. This is Hexon-interlacing protein from Human adenovirus C serotype 5 (HAdV-5).